A 110-amino-acid chain; its full sequence is UPF0060 membrane protein RSp1275 (110 aa).

Helical transmembrane passes span 8 to 28 (FLFA…WLVL), 33 to 53 (SAWL…LLTL), 63 to 83 (AAYG…VDGA), and 90 to 110 (IGGA…PQPT).

The protein belongs to the UPF0060 family.

It is found in the cell inner membrane. The protein is UPF0060 membrane protein RSp1275 of Ralstonia nicotianae (strain ATCC BAA-1114 / GMI1000) (Ralstonia solanacearum).